Consider the following 445-residue polypeptide: Glucose-6-phosphate isomerase (445 aa).

The Proton donor role is filled by Glu-287. Active-site residues include His-308 and Lys-422.

It belongs to the GPI family.

The protein resides in the cytoplasm. It catalyses the reaction alpha-D-glucose 6-phosphate = beta-D-fructose 6-phosphate. The protein operates within carbohydrate biosynthesis; gluconeogenesis. It functions in the pathway carbohydrate degradation; glycolysis; D-glyceraldehyde 3-phosphate and glycerone phosphate from D-glucose: step 2/4. Its function is as follows. Catalyzes the reversible isomerization of glucose-6-phosphate to fructose-6-phosphate. This is Glucose-6-phosphate isomerase from Bacteroides thetaiotaomicron (strain ATCC 29148 / DSM 2079 / JCM 5827 / CCUG 10774 / NCTC 10582 / VPI-5482 / E50).